A 301-amino-acid polypeptide reads, in one-letter code: tRNA dimethylallyltransferase (301 aa).

8–15 (GPTAVGKT) contributes to the ATP binding site. 10–15 (TAVGKT) lines the substrate pocket. Residues 33–36 (DSRQ) form an interaction with substrate tRNA region.

The protein belongs to the IPP transferase family. As to quaternary structure, monomer. It depends on Mg(2+) as a cofactor.

It catalyses the reaction adenosine(37) in tRNA + dimethylallyl diphosphate = N(6)-dimethylallyladenosine(37) in tRNA + diphosphate. Functionally, catalyzes the transfer of a dimethylallyl group onto the adenine at position 37 in tRNAs that read codons beginning with uridine, leading to the formation of N6-(dimethylallyl)adenosine (i(6)A). This Thermosipho africanus (strain TCF52B) protein is tRNA dimethylallyltransferase.